The sequence spans 138 residues: Ribosome-binding factor A (138 aa).

Positions 112 to 138 are disordered; it reads EARTQGQEPAADVEPAPGAAPDDEAEE. Residues 119–131 are compositionally biased toward low complexity; the sequence is EPAADVEPAPGAA.

The protein belongs to the RbfA family. Monomer. Binds 30S ribosomal subunits, but not 50S ribosomal subunits or 70S ribosomes.

The protein resides in the cytoplasm. Its function is as follows. One of several proteins that assist in the late maturation steps of the functional core of the 30S ribosomal subunit. Associates with free 30S ribosomal subunits (but not with 30S subunits that are part of 70S ribosomes or polysomes). Required for efficient processing of 16S rRNA. May interact with the 5'-terminal helix region of 16S rRNA. In Anaeromyxobacter dehalogenans (strain 2CP-C), this protein is Ribosome-binding factor A.